The sequence spans 156 residues: 6,7-dimethyl-8-ribityllumazine synthase (156 aa).

5-amino-6-(D-ribitylamino)uracil is bound by residues Phe23, Ala57–Glu59, and Ala81–Ile83. Ser86 to Thr87 lines the (2S)-2-hydroxy-3-oxobutyl phosphate pocket. Catalysis depends on His89, which acts as the Proton donor. Phe114 is a binding site for 5-amino-6-(D-ribitylamino)uracil. Arg128 lines the (2S)-2-hydroxy-3-oxobutyl phosphate pocket.

Belongs to the DMRL synthase family.

The catalysed reaction is (2S)-2-hydroxy-3-oxobutyl phosphate + 5-amino-6-(D-ribitylamino)uracil = 6,7-dimethyl-8-(1-D-ribityl)lumazine + phosphate + 2 H2O + H(+). It functions in the pathway cofactor biosynthesis; riboflavin biosynthesis; riboflavin from 2-hydroxy-3-oxobutyl phosphate and 5-amino-6-(D-ribitylamino)uracil: step 1/2. Catalyzes the formation of 6,7-dimethyl-8-ribityllumazine by condensation of 5-amino-6-(D-ribitylamino)uracil with 3,4-dihydroxy-2-butanone 4-phosphate. This is the penultimate step in the biosynthesis of riboflavin. This Campylobacter hominis (strain ATCC BAA-381 / DSM 21671 / CCUG 45161 / LMG 19568 / NCTC 13146 / CH001A) protein is 6,7-dimethyl-8-ribityllumazine synthase.